A 223-amino-acid polypeptide reads, in one-letter code: Proteasome subunit beta (223 aa).

Positions 1–6 (MDTMKG) are cleaved as a propeptide — removed in mature form; by autocatalysis. T7 functions as the Nucleophile in the catalytic mechanism.

This sequence belongs to the peptidase T1B family. The 20S proteasome core is composed of 14 alpha and 14 beta subunits that assemble into four stacked heptameric rings, resulting in a barrel-shaped structure. The two inner rings, each composed of seven catalytic beta subunits, are sandwiched by two outer rings, each composed of seven alpha subunits. The catalytic chamber with the active sites is on the inside of the barrel. Has a gated structure, the ends of the cylinder being occluded by the N-termini of the alpha-subunits. Is capped at one or both ends by the proteasome regulatory ATPase, PAN.

It localises to the cytoplasm. It carries out the reaction Cleavage of peptide bonds with very broad specificity.. Its activity is regulated as follows. The formation of the proteasomal ATPase PAN-20S proteasome complex, via the docking of the C-termini of PAN into the intersubunit pockets in the alpha-rings, triggers opening of the gate for substrate entry. Interconversion between the open-gate and close-gate conformations leads to a dynamic regulation of the 20S proteasome proteolysis activity. Its function is as follows. Component of the proteasome core, a large protease complex with broad specificity involved in protein degradation. The protein is Proteasome subunit beta of Methanocaldococcus vulcanius (strain ATCC 700851 / DSM 12094 / M7) (Methanococcus vulcanius).